The sequence spans 279 residues: Presqualene diphosphate synthase (279 aa).

This sequence belongs to the phytoene/squalene synthase family. HpnD subfamily.

It carries out the reaction 2 (2E,6E)-farnesyl diphosphate = presqualene diphosphate + diphosphate. The protein operates within secondary metabolite biosynthesis; hopanoid biosynthesis. Functionally, involved in the biosynthesis of the hopanoid precursor squalene (SQ) from farnesyl diphosphate (FPP). Catalyzes the first step, the formation of presqualene diphosphate (PSPP) from two molecules of FPP. The sequence is that of Presqualene diphosphate synthase from Rhodopseudomonas palustris (strain ATCC BAA-98 / CGA009).